We begin with the raw amino-acid sequence, 133 residues long: Putative dispanin subfamily A member 2d (133 aa).

The Extracellular segment spans residues 1 to 57 (MNHTVQTFFSPVNSGQPPNYEMLKEEHKVAVLGVPHNPAPPTSTVIHIRSKTSVPHH). Residue lysine 24 forms a Glycyl lysine isopeptide (Lys-Gly) (interchain with G-Cter in ubiquitin) linkage. A helical membrane pass occupies residues 58 to 78 (VVWSLFNTLFMNPCCLGFIAF). The Cytoplasmic portion of the chain corresponds to 79-107 (AYSVKSRDRKMVGNVTGAQAYASTTKCLN). Glycyl lysine isopeptide (Lys-Gly) (interchain with G-Cter in ubiquitin) cross-links involve residues lysine 83, lysine 88, and lysine 104. The chain crosses the membrane as a helical span at residues 108 to 128 (IWALILGILMTILLIIIPVLI). The Extracellular portion of the chain corresponds to 129–133 (FQAHR).

It belongs to the CD225/Dispanin family.

It is found in the membrane. The polypeptide is Putative dispanin subfamily A member 2d (Homo sapiens (Human)).